A 73-amino-acid polypeptide reads, in one-letter code: Bacterioferritin-associated ferredoxin (73 aa).

[2Fe-2S] cluster is bound by residues cysteine 4 and cysteine 6. Residues arginine 26 and arginine 29 each contribute to the phosphate site. Cysteine 38 and cysteine 41 together coordinate [2Fe-2S] cluster. Lysine 46 is a phosphate binding site.

This sequence belongs to the Bfd family. Monomer. Interacts with BfrB; up to 12 Bfd proteins can bind to the BfrB bacterioferritin complex (BFR). One Bfd protein binds to a BfrB dimer in the BFR, with the [2Fe-2S] cluster positioned about 22 Angstroms above the heme of BfrB. Does not interact with FtnA. [2Fe-2S] cluster serves as cofactor. It depends on phosphate as a cofactor.

In terms of biological role, required for mobilization of iron from the bacterioferritin (BFR) complex, composed of BfrB and FtnA in varying proportions; mobilization requires the [2Fe-2S] cluster of this protein. Reduction of the BfrB heme group occurs in the presence of Bfd, strongly suggesting that the BfrB-Bfd complex allows heme to mediate electron transfer from FPR to the Fe(3+) iron core in the BFR prior to its release as Fe(2+). This is Bacterioferritin-associated ferredoxin from Pseudomonas aeruginosa (strain ATCC 15692 / DSM 22644 / CIP 104116 / JCM 14847 / LMG 12228 / 1C / PRS 101 / PAO1).